A 442-amino-acid chain; its full sequence is MDPQNLSMYNDDINNGTNGTAVDQKPHYNYYAMLLTLLVFVIVFGNVLVCIAVSREKALQTTTNYLIVSLAVADLLVATLVMPWAVYMEVVGEWRFSRIHCDIFVTLDVMMCTASILNLCAISIDRYTAVAMPMLYNTRYSSKRRVTVMISVVWVLSFAISCPLLFGLNNTGSKVCIIDNPAFVIYSSIVSFYVPFIVTLLVYVQIYIVLRKRRKRVNTKRNSRGVAVDAHKDKCTHPEDVKLCSVFVKSNGSFPADKKKVILVQEAGKHPEDMEMEMMSSTSPPEKTKHKSASPDHNQLAVPATSNQCKNASLTSPVESPYKAEKNGHPKDSTKPAKVFEIQSMPNGKTRTSIKTMSKKKLSQHKEKKATQMLAIVLGVFIICWLPFFIIHILNMHCNCNIPQALYSAFTWLGYVNSAVNPIIYTTFNVEFRKAFIKILHC.

Topologically, residues 1–31 (MDPQNLSMYNDDINNGTNGTAVDQKPHYNYY) are extracellular. N-linked (GlcNAc...) asparagine glycosylation is found at asparagine 5, asparagine 15, and asparagine 18. The helical transmembrane segment at 32–54 (AMLLTLLVFVIVFGNVLVCIAVS) threads the bilayer. Topologically, residues 55 to 64 (REKALQTTTN) are cytoplasmic. Residues 65–87 (YLIVSLAVADLLVATLVMPWAVY) form a helical membrane-spanning segment. Residues 88-102 (MEVVGEWRFSRIHCD) lie on the Extracellular side of the membrane. An intrachain disulfide couples cysteine 101 to cysteine 176. The helical transmembrane segment at 103-124 (IFVTLDVMMCTASILNLCAISI) threads the bilayer. Residues 125–145 (DRYTAVAMPMLYNTRYSSKRR) lie on the Cytoplasmic side of the membrane. The chain crosses the membrane as a helical span at residues 146–166 (VTVMISVVWVLSFAISCPLLF). Residues 167-182 (GLNNTGSKVCIIDNPA) are Extracellular-facing. The helical transmembrane segment at 183–207 (FVIYSSIVSFYVPFIVTLLVYVQIY) threads the bilayer. The Cytoplasmic portion of the chain corresponds to 208-372 (IVLRKRRKRV…SQHKEKKATQ (165 aa)). Residues 273–335 (DMEMEMMSST…KNGHPKDSTK (63 aa)) form a disordered region. Positions 304–318 (ATSNQCKNASLTSPV) are enriched in polar residues. Residues 322–335 (YKAEKNGHPKDSTK) show a composition bias toward basic and acidic residues. The helical transmembrane segment at 373 to 394 (MLAIVLGVFIICWLPFFIIHIL) threads the bilayer. Residues 395–408 (NMHCNCNIPQALYS) lie on the Extracellular side of the membrane. Residues cysteine 398 and cysteine 400 are joined by a disulfide bond. Residues 409–430 (AFTWLGYVNSAVNPIIYTTFNV) traverse the membrane as a helical segment. At 431-442 (EFRKAFIKILHC) the chain is on the cytoplasmic side. A lipid anchor (S-palmitoyl cysteine) is attached at cysteine 442.

It belongs to the G-protein coupled receptor 1 family. Palmitoylated. Palmitoylation is probably required for proper localization to the plasma membrane and stability of the receptor. As to expression, brain; pituitary.

The protein localises to the cell membrane. The protein resides in the golgi apparatus membrane. In terms of biological role, this is one of the five types (D1 to D5) of receptors for dopamine. The activity of this receptor is mediated by G proteins which inhibits adenylyl cyclase. In Xenopus D2R is involved in the regulation of the melanotrope cells of the intermediate pituitary during background adaptation of the animal. The polypeptide is D(2) dopamine receptor A (drd2-a) (Xenopus laevis (African clawed frog)).